A 346-amino-acid chain; its full sequence is Elongation factor 1-alpha (346 aa).

The 127-residue stretch at 1–127 folds into the tr-type G domain; the sequence is GTSQADVALL…DNVEPPKRPS (127 aa). 49–52 is a binding site for GTP; the sequence is NKMD.

This sequence belongs to the TRAFAC class translation factor GTPase superfamily. Classic translation factor GTPase family. EF-Tu/EF-1A subfamily.

It localises to the cytoplasm. This protein promotes the GTP-dependent binding of aminoacyl-tRNA to the A-site of ribosomes during protein biosynthesis. The chain is Elongation factor 1-alpha from Eimeria bovis.